A 498-amino-acid polypeptide reads, in one-letter code: Glycylpeptide N-tetradecanoyltransferase 2 (498 aa).

Positions 1-87 (MAEDSESAAS…QPPSKNSTIP (87 aa)) are disordered. Residues 15 to 32 (ELDDQDTCGIDGDNEEET) are compositionally biased toward acidic residues. Phosphoserine is present on Ser-38. Residues 46 to 57 (KKKKKKQKRKKE) show a composition bias toward basic residues. Over residues 61-72 (SGGTKSDSASDS) the composition is skewed to polar residues. Positions 117, 122, 250, 252, 258, 260, 261, and 262 each coordinate tetradecanoyl-CoA.

This sequence belongs to the NMT family.

Its subcellular location is the cytoplasm. It is found in the membrane. The enzyme catalyses N-terminal glycyl-[protein] + tetradecanoyl-CoA = N-tetradecanoylglycyl-[protein] + CoA + H(+). The catalysed reaction is N-terminal glycyl-L-lysyl-[protein] + tetradecanoyl-CoA = N-terminal glycyl-(N(6)-tetradecanoyl)-L-lysyl-[protein] + CoA + H(+). Adds a myristoyl group to the N-terminal glycine residue of certain cellular and viral proteins. Also able to mediate N-terminal lysine myristoylation of proteins: catalyzes myristoylation of ARF6 on both 'Gly-2' and 'Lys-3'. Lysine myristoylation is required to maintain ARF6 on membranes during the GTPase cycle. The sequence is that of Glycylpeptide N-tetradecanoyltransferase 2 (NMT2) from Bos taurus (Bovine).